The sequence spans 177 residues: Interleukin-1 receptor antagonist protein (177 aa).

Residues 1–25 (MEVCRCHHGYLISLLLFLFHSETAC) form the signal peptide. A disulfide bridge connects residues C91 and C141. N109 and N114 each carry an N-linked (GlcNAc...) asparagine glycan.

Belongs to the IL-1 family.

The protein localises to the secreted. In terms of biological role, anti-inflammatory antagonist of interleukin-1 family of proinflammatory cytokines such as interleukin-1beta/IL1B and interleukin-1alpha/IL1A. Protects from immune dysregulation and uncontrolled systemic inflammation triggered by IL1 for a range of innate stimulatory agents such as pathogens. This is Interleukin-1 receptor antagonist protein (IL1RN) from Tursiops truncatus (Atlantic bottle-nosed dolphin).